The chain runs to 264 residues: Thymidylate synthase (264 aa).

Residue R21 coordinates dUMP. H51 contributes to the (6R)-5,10-methylene-5,6,7,8-tetrahydrofolate binding site. DUMP is bound at residue 126 to 127; the sequence is RR. The Nucleophile role is filled by C146. Residues 166 to 169, N177, and 207 to 209 each bind dUMP; these read RSCD and HLY. D169 contributes to the (6R)-5,10-methylene-5,6,7,8-tetrahydrofolate binding site. A263 contacts (6R)-5,10-methylene-5,6,7,8-tetrahydrofolate.

The protein belongs to the thymidylate synthase family. Bacterial-type ThyA subfamily. In terms of assembly, homodimer.

It is found in the cytoplasm. It catalyses the reaction dUMP + (6R)-5,10-methylene-5,6,7,8-tetrahydrofolate = 7,8-dihydrofolate + dTMP. It functions in the pathway pyrimidine metabolism; dTTP biosynthesis. Functionally, catalyzes the reductive methylation of 2'-deoxyuridine-5'-monophosphate (dUMP) to 2'-deoxythymidine-5'-monophosphate (dTMP) while utilizing 5,10-methylenetetrahydrofolate (mTHF) as the methyl donor and reductant in the reaction, yielding dihydrofolate (DHF) as a by-product. This enzymatic reaction provides an intracellular de novo source of dTMP, an essential precursor for DNA biosynthesis. The protein is Thymidylate synthase of Shewanella sp. (strain MR-4).